The chain runs to 266 residues: Undecaprenyl-diphosphatase (266 aa).

8 helical membrane passes run 1–21 (MDTF…FLPI), 39–59 (QGLS…VMYF), 87–107 (WWII…KGFI), 111–131 (LRNI…LWWA), 144–164 (VGWK…IPGT), 183–203 (AAAR…AILV), 218–238 (ALGL…HYFL), and 246–266 (MTPF…FIFL).

Belongs to the UppP family.

The protein resides in the cell inner membrane. The catalysed reaction is di-trans,octa-cis-undecaprenyl diphosphate + H2O = di-trans,octa-cis-undecaprenyl phosphate + phosphate + H(+). Catalyzes the dephosphorylation of undecaprenyl diphosphate (UPP). Confers resistance to bacitracin. The protein is Undecaprenyl-diphosphatase of Shewanella piezotolerans (strain WP3 / JCM 13877).